The primary structure comprises 331 residues: Eukaryotic translation initiation factor 2 subunit 2 (331 aa).

2 disordered regions span residues 1–75 and 97–120; these read MSGD…DLNF and AIKD…LDIM. Residue Ser2 is modified to N-acetylserine. Phosphoserine is present on residues Ser2 and Ser13. Over residues 13–22 the composition is skewed to basic residues; the sequence is SKKKKKKKKP. Residue Thr36 is modified to Phosphothreonine. Residues 40 to 51 show a composition bias toward basic and acidic residues; sequence ETKEVEPEPTEE. Ser67 is subject to Phosphoserine. Lys102 is covalently cross-linked (Glycyl lysine isopeptide (Lys-Gly) (interchain with G-Cter in SUMO2)). Ser105 is modified (phosphoserine). Residues 106–118 are compositionally biased toward acidic residues; sequence DAQEPAEPEDDLD. 2 positions are modified to phosphoserine: Ser158 and Ser216. Residues Lys263 and Lys291 each carry the N6-acetyllysine modification. A C4-type zinc finger spans residues 279–303; it reads CHTCRSPDTILQKDTRLYFLQCETC.

This sequence belongs to the eIF-2-beta/eIF-5 family. Eukaryotic translation initiation factor 2 eIF2 is a heterotrimeric complex composed of an alpha (EIF2S1), a beta (EIF2S2) and a gamma (EIF2S3) chain. eIF2 is member of the 43S pre-initiation complex (43S PIC). eIF2 forms a complex with at least CELF1/CUGBP1, CALR, CALR3, EIF2S1, EIF2S2, HSP90B1 and HSPA5. Interacts with BZW2/5MP1. Interacts with EIF5.

It localises to the cytoplasm. The protein resides in the cytosol. Component of the eIF2 complex that functions in the early steps of protein synthesis by forming a ternary complex with GTP and initiator tRNA. This complex binds to a 40S ribosomal subunit, followed by mRNA binding to form the 43S pre-initiation complex (43S PIC). Junction of the 60S ribosomal subunit to form the 80S initiation complex is preceded by hydrolysis of the GTP bound to eIF2 and release of an eIF2-GDP binary complex. In order for eIF2 to recycle and catalyze another round of initiation, the GDP bound to eIF2 must exchange with GTP by way of a reaction catalyzed by eIF2B. This Mus musculus (Mouse) protein is Eukaryotic translation initiation factor 2 subunit 2 (Eif2s2).